We begin with the raw amino-acid sequence, 415 residues long: Multidrug resistance protein MdtA (415 aa).

A signal peptide spans Met-1 to Ala-21. Disordered regions lie at residues Ser-32–Ala-60 and Glu-392–Ser-415. Basic and acidic residues predominate over residues Pro-399 to Ser-415.

It belongs to the membrane fusion protein (MFP) (TC 8.A.1) family. Part of a tripartite efflux system composed of MdtA, MdtB and MdtC.

The protein localises to the cell inner membrane. The MdtABC tripartite complex confers resistance against novobiocin and deoxycholate. The chain is Multidrug resistance protein MdtA from Escherichia coli O81 (strain ED1a).